Here is a 204-residue protein sequence, read N- to C-terminus: Urease accessory protein UreG (204 aa).

11–18 contacts GTP; that stretch reads GPVGAGKT.

Belongs to the SIMIBI class G3E GTPase family. UreG subfamily. As to quaternary structure, homodimer. UreD, UreF and UreG form a complex that acts as a GTP-hydrolysis-dependent molecular chaperone, activating the urease apoprotein by helping to assemble the nickel containing metallocenter of UreC. The UreE protein probably delivers the nickel.

It is found in the cytoplasm. Functionally, facilitates the functional incorporation of the urease nickel metallocenter. This process requires GTP hydrolysis, probably effectuated by UreG. In Staphylococcus saprophyticus subsp. saprophyticus (strain ATCC 15305 / DSM 20229 / NCIMB 8711 / NCTC 7292 / S-41), this protein is Urease accessory protein UreG.